A 612-amino-acid polypeptide reads, in one-letter code: DNA mismatch repair protein MutL (612 aa).

The protein belongs to the DNA mismatch repair MutL/HexB family.

Its function is as follows. This protein is involved in the repair of mismatches in DNA. It is required for dam-dependent methyl-directed DNA mismatch repair. May act as a 'molecular matchmaker', a protein that promotes the formation of a stable complex between two or more DNA-binding proteins in an ATP-dependent manner without itself being part of a final effector complex. The polypeptide is DNA mismatch repair protein MutL (Afipia carboxidovorans (strain ATCC 49405 / DSM 1227 / KCTC 32145 / OM5) (Oligotropha carboxidovorans)).